The following is a 283-amino-acid chain: Putative transposase InsK for insertion sequence element IS150 (283 aa).

In terms of domain architecture, Integrase catalytic spans Lys-117–Tyr-279.

The protein belongs to the transposase IS3/IS150/IS904 family.

Functionally, involved in the transposition of the insertion sequence IS150. In Escherichia coli (strain K12), this protein is Putative transposase InsK for insertion sequence element IS150 (insK).